The following is a 350-amino-acid chain: Type II restriction enzyme NgoBI (350 aa).

It catalyses the reaction Endonucleolytic cleavage of DNA to give specific double-stranded fragments with terminal 5'-phosphates.. Its function is as follows. A P subtype restriction enzyme that recognizes the double-stranded sequence 5'-RGCGCY-3'; the cleavage site is unknown. The protein is Type II restriction enzyme NgoBI (ngoBIR) of Neisseria gonorrhoeae.